Reading from the N-terminus, the 43-residue chain is Photosystem I reaction center subunit IX (43 aa).

The chain crosses the membrane as a helical span at residues tyrosine 7–isoleucine 27.

The protein belongs to the PsaJ family.

The protein resides in the plastid. It is found in the chloroplast thylakoid membrane. Functionally, may help in the organization of the PsaE and PsaF subunits. In Aethionema cordifolium (Lebanon stonecress), this protein is Photosystem I reaction center subunit IX.